The sequence spans 601 residues: Elongation factor 4 (601 aa).

Residues 4-186 form the tr-type G domain; the sequence is SFIRNFAIIA…SIVHLVPPPK (183 aa). Residues 16–21 and 133–136 each bind GTP; these read DHGKST and NKID.

This sequence belongs to the TRAFAC class translation factor GTPase superfamily. Classic translation factor GTPase family. LepA subfamily.

It localises to the cell inner membrane. It carries out the reaction GTP + H2O = GDP + phosphate + H(+). Functionally, required for accurate and efficient protein synthesis under certain stress conditions. May act as a fidelity factor of the translation reaction, by catalyzing a one-codon backward translocation of tRNAs on improperly translocated ribosomes. Back-translocation proceeds from a post-translocation (POST) complex to a pre-translocation (PRE) complex, thus giving elongation factor G a second chance to translocate the tRNAs correctly. Binds to ribosomes in a GTP-dependent manner. This is Elongation factor 4 from Koribacter versatilis (strain Ellin345).